We begin with the raw amino-acid sequence, 517 residues long: MSPLNGVARSLPRPFQAVARRPFRVAQPAVACPSNRRSFNHSRSLRSTGSQSPAPSPRDSSNPALSFPCLDAQEAKSALLSARSLGSGPEPSYTAGHHERFHSDEPLLLDWGGLLPEFDIAYETWGQLNEKKDNVILLHTGLSASSHAHSTEANPKPGWWEKFIGPGKTLDTDKYFVICTNVLGGCYGSTGPSTVDPSDGKKYATRFPILTIEDMVRAQFRLLDHLGVRKLYASVGSSMGGMQSLAAGVLFPERVGKIVSISGCARSHPYSIAMRHTQRQVLMMDPNWARGFYYDSIPPHSGMKLAREIATVTYRSGPEWEKRFGRKRADPSKQPALCPDFLIETYLDHAGEKFCLEYDANSLLYISKAMDLFDLGLTQQLATKKQRAEAQAKISSGTNTVNDASCSLTLPEQPYQEQPSASTSAEQSASASETGSAPNDLVAGLAPLKDHQVLVIGVASDILFPAWQQREIAETLIQAGNKTVEHIELGNDVSLFGHDTFLLDVKNVGGAVRKFLD.

Residues 1-46 (MSPLNGVARSLPRPFQAVARRPFRVAQPAVACPSNRRSFNHSRSLR) constitute a mitochondrion transit peptide. The interval 34 to 66 (SNRRSFNHSRSLRSTGSQSPAPSPRDSSNPALS) is disordered. Polar residues predominate over residues 45–64 (LRSTGSQSPAPSPRDSSNPA). An AB hydrolase-1 domain is found at 134 to 386 (NVILLHTGLS…LTQQLATKKQ (253 aa)). An important for substrate specificity region spans residues 141–144 (GLSA). S238 acts as the Nucleophile in catalysis. R307 is a binding site for substrate. Residues 413 to 436 (QPYQEQPSASTSAEQSASASETGS) form a disordered region. Over residues 416 to 436 (QEQPSASTSAEQSASASETGS) the composition is skewed to low complexity. Active-site residues include D461 and H498. D499 contacts substrate.

This sequence belongs to the AB hydrolase superfamily. MetX family.

It localises to the mitochondrion. The catalysed reaction is succinyl-CoA + L-serine = O-succinyl-L-serine + CoA. It participates in amino-acid biosynthesis; L-cysteine biosynthesis; L-cysteine from L-serine: step 1/2. Functionally, transfers a succinyl group from succinyl-CoA to L-serine, forming succinyl-L-serine. Also has weak serine acetyl transferase activity and homoserine succinyl transferase activity. The chain is Serine O-succinyltransferase from Emericella nidulans (Aspergillus nidulans).